The primary structure comprises 166 residues: Peptide deformylase (166 aa).

Fe cation-binding residues include Cys-88 and His-130. Glu-131 is an active-site residue. His-134 provides a ligand contact to Fe cation.

The protein belongs to the polypeptide deformylase family. Fe(2+) is required as a cofactor.

The enzyme catalyses N-terminal N-formyl-L-methionyl-[peptide] + H2O = N-terminal L-methionyl-[peptide] + formate. Its function is as follows. Removes the formyl group from the N-terminal Met of newly synthesized proteins. Requires at least a dipeptide for an efficient rate of reaction. N-terminal L-methionine is a prerequisite for activity but the enzyme has broad specificity at other positions. The protein is Peptide deformylase of Caldicellulosiruptor bescii (strain ATCC BAA-1888 / DSM 6725 / KCTC 15123 / Z-1320) (Anaerocellum thermophilum).